The following is a 215-amino-acid chain: Urease accessory protein UreG (215 aa).

A GTP-binding site is contributed by 24–31; it reads GPVGSGKT.

It belongs to the SIMIBI class G3E GTPase family. UreG subfamily. As to quaternary structure, homodimer. UreD, UreF and UreG form a complex that acts as a GTP-hydrolysis-dependent molecular chaperone, activating the urease apoprotein by helping to assemble the nickel containing metallocenter of UreC. The UreE protein probably delivers the nickel.

The protein localises to the cytoplasm. Functionally, facilitates the functional incorporation of the urease nickel metallocenter. This process requires GTP hydrolysis, probably effectuated by UreG. The polypeptide is Urease accessory protein UreG (Burkholderia ambifaria (strain MC40-6)).